Here is a 201-residue protein sequence, read N- to C-terminus: ADP-ribosylation factor-like protein 4D (201 aa).

Residue Gly2 is the site of N-myristoyl glycine attachment. GTP-binding positions include 28-35, 76-80, and 135-138; these read GLDSAGKT, DVGGQ, and NKQD.

The protein belongs to the small GTPase superfamily. Arf family. Interacts with CYTH2; the interaction is direct and ARL4D GTP-dependent. Does not interact with ARL4D.

The protein resides in the nucleus. It localises to the nucleolus. The protein localises to the cell membrane. Its subcellular location is the cytoplasm. Small GTP-binding protein which cycles between an inactive GDP-bound and an active GTP-bound form, and the rate of cycling is regulated by guanine nucleotide exchange factors (GEF) and GTPase-activating proteins (GAP). GTP-binding protein that does not act as an allosteric activator of the cholera toxin catalytic subunit. Recruits CYTH1, CYTH2, CYTH3 and CYTH4 to the plasma membrane in GDP-bound form. This chain is ADP-ribosylation factor-like protein 4D (ARL4D), found in Homo sapiens (Human).